Consider the following 147-residue polypeptide: Hemoglobin subunit beta (147 aa).

Position 2 is an N-acetylvaline (V2). Residues 3 to 147 (HLTGEEKSAV…VANALAHKYH (145 aa)) enclose the Globin domain. T13 bears the Phosphothreonine mark. A Phosphoserine modification is found at S45. The residue at position 60 (K60) is an N6-acetyllysine. Position 64 (H64) interacts with heme b. K83 carries the post-translational modification N6-acetyllysine. Residue H93 participates in heme b binding. C94 carries the S-nitrosocysteine modification. At K145 the chain carries N6-acetyllysine.

It belongs to the globin family. Heterotetramer of two alpha chains and two beta chains. As to expression, red blood cells.

Functionally, involved in oxygen transport from the lung to the various peripheral tissues. This is Hemoglobin subunit beta (HBB) from Callimico goeldii (Goeldi's marmoset).